The primary structure comprises 87 residues: Xibalbin-2 (87 aa).

Positions 1–25 are cleaved as a signal peptide; the sequence is MKGVCTRKVLYFFMAVILFVAIVAS. A propeptide spanning residues 26–45 is cleaved from the precursor; it reads EDTENRNPAMAMPLQRMEQE.

The protein belongs to the xibalbin-2 family. In terms of processing, contains 5 disulfide bonds. As to expression, expressed by the venom gland. Not found in the whole body.

The protein localises to the secreted. In terms of biological role, probable neurotoxin. Moderately inhibits voltage-gated potassium channels (Kv1.1/KCNA1, Kv1.2/KCNA2, Kv1.3/KCNA3, and Kv1.6/KCNA6, with the highest toxicity against Kv1.6 (73.2% inhibition at 1 uM)) and weakly inhibits sodium channels (Nav1.4/SCN4A). Does not activate protein kinase A type II (PKA-II) and MAP kinase Erk1/2 in sensory neurons. Does not show cytotoxic activity. Does not have an impact on Ca2+, cAMP, and NO signaling in the cell types analyzed. Does not interfere with the adhesion of leukocytes to endothelial cells. Functionally, moderately inhibits voltage-gated potassium channels (Kv1.1/KCNA1, Kv1.2/KCNA2, Kv1.3/KCNA3, and Kv1.6/KCNA6, with the highest toxicity against Kv1.6 (75.9% inhibition at 1 uM)). Does not activate protein kinase A type II (PKA-II) and MAP kinase Erk1/2 in sensory neurons. Does not show cytotoxic activity. Does not have an impact on Ca2+, cAMP, and NO signaling in the cell types analyzed. Does not interfere with the adhesion of leukocytes to endothelial cells. The chain is Xibalbin-2 from Xibalbanus tulumensis (Blind cave remipede).